The sequence spans 238 residues: 14-3-3 protein 2 (238 aa).

It belongs to the 14-3-3 family.

Functionally, probable adapter protein. In Entamoeba histolytica (strain ATCC 30459 / HM-1:IMSS / ABRM), this protein is 14-3-3 protein 2.